A 599-amino-acid polypeptide reads, in one-letter code: 1-deoxy-D-xylulose-5-phosphate synthase (599 aa).

Residues histidine 63 and 104-106 contribute to the thiamine diphosphate site; that span reads GHS. Residue aspartate 135 participates in Mg(2+) binding. Thiamine diphosphate contacts are provided by residues 136–137, asparagine 164, tyrosine 271, and glutamate 352; that span reads GA. Position 164 (asparagine 164) interacts with Mg(2+).

This sequence belongs to the transketolase family. DXPS subfamily. In terms of assembly, homodimer. Mg(2+) serves as cofactor. Requires thiamine diphosphate as cofactor.

The catalysed reaction is D-glyceraldehyde 3-phosphate + pyruvate + H(+) = 1-deoxy-D-xylulose 5-phosphate + CO2. The protein operates within metabolic intermediate biosynthesis; 1-deoxy-D-xylulose 5-phosphate biosynthesis; 1-deoxy-D-xylulose 5-phosphate from D-glyceraldehyde 3-phosphate and pyruvate: step 1/1. Functionally, catalyzes the acyloin condensation reaction between C atoms 2 and 3 of pyruvate and glyceraldehyde 3-phosphate to yield 1-deoxy-D-xylulose-5-phosphate (DXP). This Nitratiruptor sp. (strain SB155-2) protein is 1-deoxy-D-xylulose-5-phosphate synthase.